We begin with the raw amino-acid sequence, 243 residues long: Triosephosphate isomerase (243 aa).

Residue 9–11 (NWK) participates in substrate binding. The active-site Electrophile is the His-96. Glu-165 (proton acceptor) is an active-site residue. Substrate contacts are provided by residues Gly-171, Ser-204, and 225–226 (GG).

The protein belongs to the triosephosphate isomerase family. As to quaternary structure, homodimer.

It is found in the cytoplasm. It catalyses the reaction D-glyceraldehyde 3-phosphate = dihydroxyacetone phosphate. Its pathway is carbohydrate biosynthesis; gluconeogenesis. The protein operates within carbohydrate degradation; glycolysis; D-glyceraldehyde 3-phosphate from glycerone phosphate: step 1/1. In terms of biological role, involved in the gluconeogenesis. Catalyzes stereospecifically the conversion of dihydroxyacetone phosphate (DHAP) to D-glyceraldehyde-3-phosphate (G3P). In Synechococcus sp. (strain CC9902), this protein is Triosephosphate isomerase.